Consider the following 274-residue polypeptide: Protein CURLY FLAG LEAF 1 (274 aa).

The segment at S17 to E44 is disordered. The short motif at T47–S52 is the EAR element. The region spanning V54–S88 is the WW domain. Disordered regions lie at residues T83–T133 and G175–D216. Low complexity-rich tracts occupy residues R87–R106, A121–T133, and S184–S207.

In terms of assembly, binds to HDG1.

Its function is as follows. Negatively regulates the cuticle development probably by interacting with the HD-ZIP IV transcription factor HDG1. This Oryza sativa subsp. japonica (Rice) protein is Protein CURLY FLAG LEAF 1.